We begin with the raw amino-acid sequence, 495 residues long: Ectonucleoside triphosphate diphosphohydrolase 2 (495 aa).

Topologically, residues 1–7 are cytoplasmic; that stretch reads MAGKVRS. Residues 8-28 traverse the membrane as a helical segment; sequence LLPPLLLAAAGLAGLLLLCVP. The Extracellular segment spans residues 29–462; it reads TRDVREPPAL…PGLRKGTDFS (434 aa). N-linked (GlcNAc...) asparagine glycosylation occurs at asparagine 64. Residues cysteine 75 and cysteine 99 are joined by a disulfide bond. Asparagine 129 is a glycosylation site (N-linked (GlcNAc...) asparagine). The active-site Proton acceptor is glutamate 165. 204–208 contributes to the ATP binding site; it reads GASTQ. Disulfide bonds link cysteine 242-cysteine 284, cysteine 265-cysteine 310, cysteine 323-cysteine 328, and cysteine 377-cysteine 399. Asparagine 294 carries N-linked (GlcNAc...) asparagine glycosylation. N-linked (GlcNAc...) asparagine glycosylation is found at asparagine 378 and asparagine 443. A helical membrane pass occupies residues 463–483; the sequence is SWVVLLLLFASALLAALVLLL. The Cytoplasmic portion of the chain corresponds to 484 to 495; sequence RQVHSAKLPSTI.

Belongs to the GDA1/CD39 NTPase family. Requires Ca(2+) as cofactor. The cofactor is Mg(2+). In terms of tissue distribution, brain, placenta, skeletal muscle, kidney, pancreas, heart, ovary, testis, colon, small intestine, prostate and pancreas. No expression in adult thymus, spleen, lung, liver and peripheral blood leukocytes.

The protein resides in the cell membrane. Its subcellular location is the endoplasmic reticulum membrane. Functionally, in the nervous system, could hydrolyze ATP and other nucleotides to regulate purinergic neurotransmission. Hydrolyzes ADP only to a marginal extent. The order of activity with different substrates is ATP &gt; GTP &gt; CTP = ITP &gt; UTP &gt;&gt; ADP = UDP. The protein is Ectonucleoside triphosphate diphosphohydrolase 2 (ENTPD2) of Homo sapiens (Human).